We begin with the raw amino-acid sequence, 308 residues long: Prephenate dehydratase (308 aa).

One can recognise a Prephenate dehydratase domain in the interval 3–187 (RITYLGPEGT…AHTRFVLVGR (185 aa)). In terms of domain architecture, ACT spans 201 to 278 (SVVLGLGNVP…EDVRYLGSWP (78 aa)).

In terms of assembly, homodimer.

It carries out the reaction prephenate + H(+) = 3-phenylpyruvate + CO2 + H2O. The protein operates within amino-acid biosynthesis; L-phenylalanine biosynthesis; phenylpyruvate from prephenate: step 1/1. This is Prephenate dehydratase (pheA) from Mycobacteroides abscessus (strain ATCC 19977 / DSM 44196 / CCUG 20993 / CIP 104536 / JCM 13569 / NCTC 13031 / TMC 1543 / L948) (Mycobacterium abscessus).